The chain runs to 940 residues: Alanine--tRNA ligase (940 aa).

The Zn(2+) site is built by His-581, His-585, Cys-683, and His-687.

This sequence belongs to the class-II aminoacyl-tRNA synthetase family. Requires Zn(2+) as cofactor.

The protein resides in the cytoplasm. It catalyses the reaction tRNA(Ala) + L-alanine + ATP = L-alanyl-tRNA(Ala) + AMP + diphosphate. In terms of biological role, catalyzes the attachment of alanine to tRNA(Ala) in a two-step reaction: alanine is first activated by ATP to form Ala-AMP and then transferred to the acceptor end of tRNA(Ala). Also edits incorrectly charged Ser-tRNA(Ala) and Gly-tRNA(Ala) via its editing domain. This Leptospira borgpetersenii serovar Hardjo-bovis (strain L550) protein is Alanine--tRNA ligase.